A 204-amino-acid polypeptide reads, in one-letter code: Large ribosomal subunit protein uL4 (204 aa).

A disordered region spans residues 49–75; the sequence is TKGRSDVSGGGKKPWRQKGRGGARAGS.

This sequence belongs to the universal ribosomal protein uL4 family. Part of the 50S ribosomal subunit.

One of the primary rRNA binding proteins, this protein initially binds near the 5'-end of the 23S rRNA. It is important during the early stages of 50S assembly. It makes multiple contacts with different domains of the 23S rRNA in the assembled 50S subunit and ribosome. In terms of biological role, forms part of the polypeptide exit tunnel. The polypeptide is Large ribosomal subunit protein uL4 (Campylobacter jejuni subsp. jejuni serotype O:23/36 (strain 81-176)).